The chain runs to 394 residues: MSKETFQRNKPHINIGTIGHVDHGKTTLTAAITRALSGDGLASFRDYSSIDNTPEEKARGITINASHVEYETPNRHYAHVDCPGHADYVKNMITGAAQMDGAILVVSATDGAMPQTKEHILLARQVGVPYIVVFLNKVDMISQEDAELIDLVEMELSELLEEKGYKGCPIIRGSALKALEGDANYIEKVRELMQAVDDNIPTPEREIDKPFLMPIEDVFSISGRGTVVTGRIERGIVKVSDKVQLVGLGETKETIVTGVEMFRKELPEGRAGENVGLLLRGIGKNDVERGMVVCQPNSVKPHTKFKSAVYVLQKEEGGRHKPFFSGYRPQFFFRTTDVTGVVTLPEGTEMVMPGDNVELDVELIGTVALEEGMRFAIREGGRTIGAGTISKINA.

The tr-type G domain maps to 10-204 (KPHINIGTIG…AVDDNIPTPE (195 aa)). The segment at 19 to 26 (GHVDHGKT) is G1. GTP is bound at residue 19–26 (GHVDHGKT). Thr-26 is a binding site for Mg(2+). Residues 60-64 (GITIN) form a G2 region. The G3 stretch occupies residues 81–84 (DCPG). GTP is bound by residues 81-85 (DCPGH) and 136-139 (NKVD). The segment at 136 to 139 (NKVD) is G4. Positions 174–176 (SAL) are G5.

Belongs to the TRAFAC class translation factor GTPase superfamily. Classic translation factor GTPase family. EF-Tu/EF-1A subfamily. As to quaternary structure, monomer.

The protein localises to the cytoplasm. It catalyses the reaction GTP + H2O = GDP + phosphate + H(+). In terms of biological role, GTP hydrolase that promotes the GTP-dependent binding of aminoacyl-tRNA to the A-site of ribosomes during protein biosynthesis. The protein is Elongation factor Tu of Chlamydia pneumoniae (Chlamydophila pneumoniae).